An 826-amino-acid chain; its full sequence is Zinc phosphodiesterase ELAC protein 2 (826 aa).

The transit peptide at 1 to 16 directs the protein to the mitochondrion; sequence MWALCSLLRSAAGRTM. Disordered regions lie at residues 16-51 and 188-231; these read MSQG…PSGC and EQRR…VSQR. Over residues 27-38 the composition is skewed to basic and acidic residues; the sequence is ARRERPRKDPLR. Phosphoserine occurs at positions 199, 208, 212, 229, 618, and 736. Over residues 208-224 the composition is skewed to basic and acidic residues; sequence SPERSSDSESNENEPHL. Residues 798–826 are disordered; the sequence is ELAGGLEDGEPQQKRAHTEEPQAKKVRAQ. Residues 808 to 820 are compositionally biased toward basic and acidic residues; the sequence is PQQKRAHTEEPQA.

Belongs to the RNase Z family. Homodimer. Interacts with PTCD1. It depends on Zn(2+) as a cofactor.

The protein resides in the mitochondrion. Its subcellular location is the mitochondrion matrix. The protein localises to the mitochondrion nucleoid. It is found in the nucleus. The catalysed reaction is Endonucleolytic cleavage of RNA, removing extra 3' nucleotides from tRNA precursor, generating 3' termini of tRNAs. A 3'-hydroxy group is left at the tRNA terminus and a 5'-phosphoryl group is left at the trailer molecule.. Functionally, zinc phosphodiesterase, which displays mitochondrial tRNA 3'-processing endonuclease activity. Involved in tRNA maturation, by removing a 3'-trailer from precursor tRNA. Associates with mitochondrial DNA complexes at the nucleoids to initiate RNA processing and ribosome assembly. The sequence is that of Zinc phosphodiesterase ELAC protein 2 (ELAC2) from Pan troglodytes (Chimpanzee).